We begin with the raw amino-acid sequence, 767 residues long: Two-component response regulator-like PRR73 (767 aa).

The disordered stretch occupies residues 1-64 (MGSACEAGTD…EPQQTDEQKE (64 aa)). The 119-residue stretch at 82–200 (RVLLVENDDS…ELKNLWQHVW (119 aa)) folds into the Response regulatory domain. The segment covering 205–214 (SSSGSGSESG) has biased composition (low complexity). Disordered stretches follow at residues 205-272 (SSSG…QSSW), 312-388 (RWLP…NEPT), 476-546 (ASNQ…RGKV), 646-701 (ANYS…SGSG), and 727-767 (NFGK…DEDR). The span at 238 to 252 (DNEDDDDNDEDDDDL) shows a compositional bias: acidic residues. Composition is skewed to polar residues over residues 263-272 (DNGSGTQSSW), 343-361 (RNSS…VNPT), and 488-497 (CSPQDNSSEA). Residues 518 to 531 (GSNGSSNNNDMGSS) are compositionally biased toward low complexity. Positions 532–543 (TKNAITKPSSNR) are enriched in polar residues. Positions 689–700 (GAGGGNGSGSGS) are enriched in gly residues. One can recognise a CCT domain in the interval 712–754 (REAALNKFRQKRKVRNFGKKVRYQSRKRLAEQRPRIRGQFVRQ). Positions 727–738 (NFGKKVRYQSRK) are enriched in basic residues.

It belongs to the ARR-like family.

Its subcellular location is the nucleus. Its function is as follows. Controls photoperiodic flowering response. Seems to be one of the component of the circadian clock. Expression of several members of the ARR-like family is controlled by circadian rhythm. The particular coordinated sequential expression of PRR73, PRR37, PRR95, PRR59 and PPR1 result to circadian waves that may be at the basis of the endogenous circadian clock. This Oryza sativa subsp. japonica (Rice) protein is Two-component response regulator-like PRR73 (PRR73).